The sequence spans 59 residues: Large ribosomal subunit protein bL32c (59 aa).

Residues 36–59 (KSRSFSGVSEHPKPKGFSRQQTNK) are disordered.

The protein belongs to the bacterial ribosomal protein bL32 family.

It is found in the plastid. It localises to the chloroplast. This is Large ribosomal subunit protein bL32c from Oryza nivara (Indian wild rice).